A 388-amino-acid polypeptide reads, in one-letter code: ATP phosphoribosyltransferase regulatory subunit (388 aa).

The protein belongs to the class-II aminoacyl-tRNA synthetase family. HisZ subfamily. Heteromultimer composed of HisG and HisZ subunits.

The protein localises to the cytoplasm. The protein operates within amino-acid biosynthesis; L-histidine biosynthesis; L-histidine from 5-phospho-alpha-D-ribose 1-diphosphate: step 1/9. In terms of biological role, required for the first step of histidine biosynthesis. May allow the feedback regulation of ATP phosphoribosyltransferase activity by histidine. This chain is ATP phosphoribosyltransferase regulatory subunit, found in Acinetobacter baumannii (strain SDF).